A 430-amino-acid chain; its full sequence is Serine hydroxymethyltransferase 2 (430 aa).

(6S)-5,6,7,8-tetrahydrofolate-binding positions include Leu-128 and 132–134; that span reads GHL. The residue at position 237 (Lys-237) is an N6-(pyridoxal phosphate)lysine.

It belongs to the SHMT family. As to quaternary structure, homodimer. It depends on pyridoxal 5'-phosphate as a cofactor.

It localises to the cytoplasm. The catalysed reaction is (6R)-5,10-methylene-5,6,7,8-tetrahydrofolate + glycine + H2O = (6S)-5,6,7,8-tetrahydrofolate + L-serine. It functions in the pathway one-carbon metabolism; tetrahydrofolate interconversion. The protein operates within amino-acid biosynthesis; glycine biosynthesis; glycine from L-serine: step 1/1. Catalyzes the reversible interconversion of serine and glycine with tetrahydrofolate (THF) serving as the one-carbon carrier. This reaction serves as the major source of one-carbon groups required for the biosynthesis of purines, thymidylate, methionine, and other important biomolecules. Also exhibits THF-independent aldolase activity toward beta-hydroxyamino acids, producing glycine and aldehydes, via a retro-aldol mechanism. This Rhodospirillum rubrum (strain ATCC 11170 / ATH 1.1.1 / DSM 467 / LMG 4362 / NCIMB 8255 / S1) protein is Serine hydroxymethyltransferase 2.